Reading from the N-terminus, the 127-residue chain is Aspartate 1-decarboxylase (127 aa).

The active-site Schiff-base intermediate with substrate; via pyruvic acid is the Ser25. A Pyruvic acid (Ser) modification is found at Ser25. Thr57 contributes to the substrate binding site. Tyr58 (proton donor) is an active-site residue. Substrate is bound at residue Gly73–Ala75.

This sequence belongs to the PanD family. As to quaternary structure, heterooctamer of four alpha and four beta subunits. Pyruvate is required as a cofactor. In terms of processing, is synthesized initially as an inactive proenzyme, which is activated by self-cleavage at a specific serine bond to produce a beta-subunit with a hydroxyl group at its C-terminus and an alpha-subunit with a pyruvoyl group at its N-terminus.

It is found in the cytoplasm. It carries out the reaction L-aspartate + H(+) = beta-alanine + CO2. It functions in the pathway cofactor biosynthesis; (R)-pantothenate biosynthesis; beta-alanine from L-aspartate: step 1/1. In terms of biological role, catalyzes the pyruvoyl-dependent decarboxylation of aspartate to produce beta-alanine. The polypeptide is Aspartate 1-decarboxylase (Trichormus variabilis (strain ATCC 29413 / PCC 7937) (Anabaena variabilis)).